The following is a 691-amino-acid chain: Elongation factor G (691 aa).

Positions Asp-8–Ile-282 constitute a tr-type G domain. GTP contacts are provided by residues Ala-17 to Thr-24, Asp-81 to His-85, and Asn-135 to Asp-138.

It belongs to the TRAFAC class translation factor GTPase superfamily. Classic translation factor GTPase family. EF-G/EF-2 subfamily.

The protein localises to the cytoplasm. Its function is as follows. Catalyzes the GTP-dependent ribosomal translocation step during translation elongation. During this step, the ribosome changes from the pre-translocational (PRE) to the post-translocational (POST) state as the newly formed A-site-bound peptidyl-tRNA and P-site-bound deacylated tRNA move to the P and E sites, respectively. Catalyzes the coordinated movement of the two tRNA molecules, the mRNA and conformational changes in the ribosome. This chain is Elongation factor G, found in Synechococcus sp. (strain RCC307).